The chain runs to 348 residues: Mycothiol acetyltransferase (348 aa).

2 N-acetyltransferase domains span residues 12–156 (TSMR…VDVT) and 169–330 (VAVR…HGTP). Glutamate 44 contacts 1D-myo-inositol 2-(L-cysteinylamino)-2-deoxy-alpha-D-glucopyranoside. 91-93 (LVV) contacts acetyl-CoA. 1D-myo-inositol 2-(L-cysteinylamino)-2-deoxy-alpha-D-glucopyranoside-binding residues include glutamate 196, lysine 235, and glutamate 253. Acetyl-CoA contacts are provided by residues 257–259 (VGV) and 264–270 (QGLGMGR). Tyrosine 291 is a binding site for 1D-myo-inositol 2-(L-cysteinylamino)-2-deoxy-alpha-D-glucopyranoside. Residue 296–301 (NTVAVH) participates in acetyl-CoA binding. The segment at 320-348 (PPAGSPAHGTPLVRVTDTPSSPGDATMGS) is disordered. A compositionally biased stretch (polar residues) spans 336–348 (DTPSSPGDATMGS).

This sequence belongs to the acetyltransferase family. MshD subfamily. In terms of assembly, monomer.

The catalysed reaction is 1D-myo-inositol 2-(L-cysteinylamino)-2-deoxy-alpha-D-glucopyranoside + acetyl-CoA = mycothiol + CoA + H(+). In terms of biological role, catalyzes the transfer of acetyl from acetyl-CoA to desacetylmycothiol (Cys-GlcN-Ins) to form mycothiol. The sequence is that of Mycothiol acetyltransferase from Cellulomonas flavigena (strain ATCC 482 / DSM 20109 / BCRC 11376 / JCM 18109 / NBRC 3775 / NCIMB 8073 / NRS 134).